The primary structure comprises 176 residues: Prepronociceptin (176 aa).

An N-terminal signal peptide occupies residues 1–19; it reads MKILFCDLLLLSLFSSVSS. 2 propeptides span residues 20 to 95 and 169 to 176; these read SCQK…MQHL and TLHQNGNA.

This sequence belongs to the opioid neuropeptide precursor family. Post-translationally, specific enzymatic cleavages at paired basic residues probably yield other active peptides besides nociceptin. The N-terminal domain contains 6 conserved cysteines thought to be involved in disulfide bonding and/or processing.

The protein localises to the secreted. In terms of biological role, ligand of the opioid receptor-like receptor OPRL1. It may act as a transmitter in the brain by modulating nociceptive and locomotor behavior. May be involved in neuronal differentiation and development. Blocks nociceptin action in pain transmission by inhibiting nociceptin-induced hyperalgesia and allodynia. Its function is as follows. Has potent analgesic activity. The chain is Prepronociceptin (PNOC) from Bos taurus (Bovine).